Here is a 617-residue protein sequence, read N- to C-terminus: MDISAAVFNAARDGKLKLMQKLLINKSPEERAALAEERTEGGTPLLIAARYGHLPVVHFLLERCGANVALGGSVNFDGETIEGAPPLWAASAAGHLPVVKALLEHGAPVNNTTLTNSTPLRAACFDGHLEIVRYLVEHQADLEVANRHGHTCLMISCYKGHREIAQFLLEKGADVNRKSVKGNTALHDCAESGSLEIMKMLLKCDARMERDGYGMTPLLAASVTGHTNIVEFLVHQPRASREQRIHALELLGATFVDKKRDLLGAMRYWRRAMELRWAGGQAGALEKPTAGPLVPAYDCSREVSTAEELEALITDPDDMRMQALLVRERILGPAHPDTSYYIRYRGAVYADSGNFERCIRLWKYALDMQQSNLEPLSPMTASSFLSFAELFSFVLQDRAKGTLAARVSFQDLMGVLSKSVREVERAVAQRERPPEPPQFSKALSIILHLLFLLQKLRCGPEQEHLKRQTVYRLLKLNPRARGGHTPLHMAVDRDTTSVGRYPVGRFPSLAVASLLLECGADVDSRDYDNNTPLHIAAANGCPDIMAALIRAGAHFDATNAAQQTAYQLLEAQSSGRHALHPLNHTTLQCLAARAVTAHRLPYKGLISEQMEAFIELH.

ANK repeat units follow at residues D2 to A32, E40 to L70, E82 to N111, T115 to V144, H148 to R177, K181 to R210, and Y213 to E242. 2 TPR repeats span residues I245–G279 and S339–N372. ANK repeat units follow at residues G482–S524 and D528–A557.

Belongs to the fem-1 family. As to quaternary structure, component of a CRL2 E3 ubiquitin-protein ligase complex, also named ECS (Elongin BC-CUL2/5-SOCS-box protein) complex.

The protein localises to the mitochondrion. It localises to the cytoplasm. Its pathway is protein modification; protein ubiquitination. Its function is as follows. Substrate-recognition component of a Cul2-RING (CRL2) E3 ubiquitin-protein ligase complex of the DesCEND (destruction via C-end degrons) pathway, which recognizes a C-degron located at the extreme C terminus of target proteins, leading to their ubiquitination and degradation. The C-degron recognized by the DesCEND pathway is usually a motif of less than ten residues and can be present in full-length proteins, truncated proteins or proteolytically cleaved forms. The CRL2(FEM1A) complex specifically recognizes proteins with an arginine at the C-terminus: recognizes and binds proteins ending with -Lys/Arg-Xaa-Arg and -Lys/Arg-Xaa-Xaa-Arg C-degrons, leading to their ubiquitination and degradation. The protein is Protein fem-1 homolog A of Danio rerio (Zebrafish).